The following is a 547-amino-acid chain: Germacrene A synthase (547 aa).

The Mg(2+) site is built by Asp300, Asp304, Asp443, and Glu451. The DDXXD motif motif lies at 300–304; sequence DDTYD.

The protein belongs to the terpene synthase family. Tpsa subfamily. It depends on Mg(2+) as a cofactor. Requires Mn(2+) as cofactor. Expressed in leaves.

The protein resides in the plastid. The protein localises to the chloroplast. It catalyses the reaction (2E,6E)-farnesyl diphosphate = germacrene A + diphosphate. The catalysed reaction is (2E,6E)-farnesyl diphosphate = (1S,2S,4R)-beta-elemene + diphosphate. It participates in secondary metabolite biosynthesis; terpenoid biosynthesis. Functionally, sesquiterpene synthase involved in the biosynthesis of volatile compounds widely used in aromatherapy and folk medicine, and present in culinary herbs. Mediates the conversion of (2E,6E)-farnesyl diphosphate (FPP) into germacrene A and beta-elemene. Not able to use (2E)-geranyl diphosphate (GPP) as substrate. The polypeptide is Germacrene A synthase (Lavandula pedunculata subsp. lusitanica (French lavender)).